The chain runs to 190 residues: Carbonic anhydrase 2 (190 aa).

Belongs to the beta-class carbonic anhydrase family. In terms of assembly, homohexamer.

The protein resides in the cytoplasm. The enzyme catalyses hydrogencarbonate + H(+) = CO2 + H2O. Reversible hydration of carbon dioxide. The protein is Carbonic anhydrase 2 of Flaveria linearis (Narrowleaf yellowtops).